Consider the following 308-residue polypeptide: uncharacterized protein (308 aa).

This is an uncharacterized protein from Bacillus subtilis (strain 168).